A 182-amino-acid polypeptide reads, in one-letter code: Dual-action ribosomal maturation protein DarP (182 aa).

It belongs to the DarP family.

It localises to the cytoplasm. Member of a network of 50S ribosomal subunit biogenesis factors which assembles along the 30S-50S interface, preventing incorrect 23S rRNA structures from forming. Promotes peptidyl transferase center (PTC) maturation. The sequence is that of Dual-action ribosomal maturation protein DarP from Serratia proteamaculans (strain 568).